The sequence spans 354 residues: NADH-quinone oxidoreductase subunit H (354 aa).

The next 8 helical transmembrane spans lie at 22-42 (ILIR…YLIL), 91-111 (YLIA…VIPF), 124-144 (LLYV…AGWA), 168-188 (MGFA…SAIV), 203-223 (ILSW…ISGV), 255-275 (LFFL…ALMF), 291-311 (IPGF…FIWI), and 326-346 (LGWK…AIWI).

The protein belongs to the complex I subunit 1 family. NDH-1 is composed of 14 different subunits. Subunits NuoA, H, J, K, L, M, N constitute the membrane sector of the complex.

It localises to the cell inner membrane. The catalysed reaction is a quinone + NADH + 5 H(+)(in) = a quinol + NAD(+) + 4 H(+)(out). In terms of biological role, NDH-1 shuttles electrons from NADH, via FMN and iron-sulfur (Fe-S) centers, to quinones in the respiratory chain. The immediate electron acceptor for the enzyme in this species is believed to be ubiquinone. Couples the redox reaction to proton translocation (for every two electrons transferred, four hydrogen ions are translocated across the cytoplasmic membrane), and thus conserves the redox energy in a proton gradient. This subunit may bind ubiquinone. The protein is NADH-quinone oxidoreductase subunit H of Cupriavidus necator (strain ATCC 17699 / DSM 428 / KCTC 22496 / NCIMB 10442 / H16 / Stanier 337) (Ralstonia eutropha).